The sequence spans 212 residues: MTEILTSDDMRSLERAAIASGRASGLELMERAGAAVVEAIAEAWPDIRPPAVALRHAMILCGPGNNGGDGFVVARLLRRRGWKVTLYLYGEADRLPPDARANHDRWRRIGTIAPLPAAPDFSSADLVVDALFGLGLTRPLTGFGPIFAALASAGRPVLAIDLPSGRDADARADAAGWPSAPCSLAVTFHREKPAHAQLRAEGIGVIVKPIGL.

The YjeF N-terminal domain maps to 10-212 (MRSLERAAIA…IGVIVKPIGL (203 aa)). 65 to 69 (NNGGD) contacts (6S)-NADPHX. N66 and D129 together coordinate K(+). Residues 133-139 (GLGLTRP) and D161 contribute to the (6S)-NADPHX site. S164 provides a ligand contact to K(+).

It belongs to the NnrE/AIBP family. It depends on K(+) as a cofactor.

The enzyme catalyses (6R)-NADHX = (6S)-NADHX. The catalysed reaction is (6R)-NADPHX = (6S)-NADPHX. In terms of biological role, catalyzes the epimerization of the S- and R-forms of NAD(P)HX, a damaged form of NAD(P)H that is a result of enzymatic or heat-dependent hydration. This is a prerequisite for the S-specific NAD(P)H-hydrate dehydratase to allow the repair of both epimers of NAD(P)HX. The chain is NAD(P)H-hydrate epimerase from Rhodobacter capsulatus (strain ATCC BAA-309 / NBRC 16581 / SB1003).